A 117-amino-acid chain; its full sequence is Large ribosomal subunit protein bL20c (117 aa).

The protein belongs to the bacterial ribosomal protein bL20 family.

It localises to the plastid. The protein localises to the chloroplast. Functionally, binds directly to 23S ribosomal RNA and is necessary for the in vitro assembly process of the 50S ribosomal subunit. It is not involved in the protein synthesizing functions of that subunit. The protein is Large ribosomal subunit protein bL20c of Nasturtium officinale (Watercress).